Consider the following 427-residue polypeptide: GTPase Obg (427 aa).

The 158-residue stretch at 1–158 (MFIDKAKIHL…LTVTLELKLI (158 aa)) folds into the Obg domain. The region spanning 159-330 (ADVGLVGFPN…LLDYVSIKLK (172 aa)) is the OBG-type G domain. GTP contacts are provided by residues 165-172 (GFPNVGKS), 190-194 (FTTLT), 212-215 (DIPG), 282-285 (NKTD), and 311-313 (SAA). Mg(2+) is bound by residues Ser172 and Thr192. In terms of domain architecture, OCT spans 347–427 (LYELKEKDTN…IYDVEFEYFH (81 aa)).

Belongs to the TRAFAC class OBG-HflX-like GTPase superfamily. OBG GTPase family. In terms of assembly, monomer. Mg(2+) serves as cofactor.

Its subcellular location is the cytoplasm. Functionally, an essential GTPase which binds GTP, GDP and possibly (p)ppGpp with moderate affinity, with high nucleotide exchange rates and a fairly low GTP hydrolysis rate. Plays a role in control of the cell cycle, stress response, ribosome biogenesis and in those bacteria that undergo differentiation, in morphogenesis control. The polypeptide is GTPase Obg (Alkaliphilus metalliredigens (strain QYMF)).